We begin with the raw amino-acid sequence, 164 residues long: Choriogonadotropin subunit beta (164 aa).

The first 20 residues, 1–20 (MEMLQGLLLCLLLSTGGAWA), serve as a signal peptide directing secretion. Cystine bridges form between C29/C77, C43/C92, C46/C130, C54/C108, C58/C110, and C113/C120. N50 is a glycosylation site (N-linked (GlcNAc...) asparagine). A disordered region spans residues 135 to 164 (FQDSSSKDPPRNLTSPSQLLEPADPPLVPQ). An O-linked (GalNAc...) serine glycan is attached at S140. N146 is a glycosylation site (N-linked (GlcNAc...) asparagine). S151 carries an O-linked (GalNAc...) serine glycan.

This sequence belongs to the glycoprotein hormones subunit beta family. Heterodimer of a common alpha chain and a unique beta chain which confers biological specificity to thyrotropin, lutropin, follitropin and gonadotropin. In terms of tissue distribution, placenta.

It localises to the secreted. Functionally, stimulates the ovaries to synthesize the steroids that are essential for the maintenance of pregnancy. The sequence is that of Choriogonadotropin subunit beta (CGB) from Callithrix jacchus (White-tufted-ear marmoset).